The chain runs to 481 residues: Serralysin B (481 aa).

The propeptide occupies 1-15 (MQQNEKASLNTSAAA). Histidine 189 contacts Zn(2+). Residue glutamate 190 is part of the active site. 2 residues coordinate Zn(2+): histidine 193 and tyrosine 230. Ca(2+) contacts are provided by arginine 267, glycine 269, threonine 271, aspartate 299, glycine 301, glycine 302, aspartate 304, threonine 341, glutamate 343, glycine 348, glycine 350, aspartate 352, asparagine 357, alanine 359, asparagine 361, glycine 365, glycine 366, alanine 367, glycine 368, aspartate 370, glycine 374, glycine 377, aspartate 379, glycine 383, glycine 384, alanine 385, glycine 386, aspartate 388, aspartate 397, aspartate 404, and aspartate 414. Hemolysin-type calcium-binding repeat units follow at residues 346-363 (IGGS…DNIL), 364-381 (QGGA…ADTL), and 382-399 (TGGA…QDST).

The protein belongs to the peptidase M10B family. It depends on Ca(2+) as a cofactor. Zn(2+) is required as a cofactor.

It is found in the secreted. The enzyme catalyses Preferential cleavage of bonds with hydrophobic residues in P1'.. The polypeptide is Serralysin B (prtB) (Dickeya chrysanthemi (Pectobacterium chrysanthemi)).